A 511-amino-acid polypeptide reads, in one-letter code: Exodeoxyribonuclease 7 large subunit (511 aa).

This sequence belongs to the XseA family. In terms of assembly, heterooligomer composed of large and small subunits.

It localises to the cytoplasm. It carries out the reaction Exonucleolytic cleavage in either 5'- to 3'- or 3'- to 5'-direction to yield nucleoside 5'-phosphates.. Its function is as follows. Bidirectionally degrades single-stranded DNA into large acid-insoluble oligonucleotides, which are then degraded further into small acid-soluble oligonucleotides. The chain is Exodeoxyribonuclease 7 large subunit from Brucella abortus (strain S19).